The chain runs to 1163 residues: Type IV pilus biogenesis factor PilY1 (1163 aa).

The signal sequence occupies residues 1–30 (MKSALHQIGKTSLAAALSGAVLLSAQTTHA). Residues 329–352 (SVGNADSTSRSLPDGKSYSSQTPY) are disordered. Ca(2+)-binding residues include Asp-600, Asp-602, Asn-604, and Asp-608. Residues 619 to 621 (RGD) are integrin-binding motif RGD. 5 residues coordinate Ca(2+): Asp-851, Asn-853, Asp-855, Val-857, and Asp-859. The interval 1138–1163 (SGECLTVNPGPNTRGRQNWRPIEGKN) is disordered.

It belongs to the PilY1 family. In terms of assembly, interacts (via C-terminal 532-1163) with host integrins alpha-V/beta-3 (ITGAV/ITGB3) and alpha-V/beta-5 (ITGAV/ITGB5).

The protein resides in the fimbrium. It is found in the membrane. The protein localises to the cytoplasm. It localises to the cytosol. Its function is as follows. Involved in pilus assembly, twitching motility and adhesion to host cells. Primes type IV pili (T4P) assembly and is required for inclusion of minor pilins PilV, PilW and PilX to the surface pili. Stabilizes assembled pilus fibers likely by antagonizing retraction mediated by PilT. Calcium-binding and calcium release by PilY1 seem to be essential for twitching motility and for regulation of pilus retraction dynamics of PilT. Adhesin for human tissue specifically recognizing a host receptor localized or enriched on basolateral epithelial cell surfaces. Binds host integrins in an calcium-dependent manner in vitro and this interaction may be employed by the bacterium to mediate host epithelial cell binding in vivo. The protein is Type IV pilus biogenesis factor PilY1 of Pseudomonas aeruginosa (strain PAK).